Consider the following 436-residue polypeptide: Protein 60A (436 aa).

The signal sequence occupies residues 1–27 (MTASLVVLPSLWLILIIFTAPYTHCTQ). Residues 28 to 317 (SGIYIDNGKD…STLHQRKKSK (290 aa)) constitute a propeptide that is removed on maturation. N-linked (GlcNAc...) asparagine glycosylation is found at asparagine 102, asparagine 114, asparagine 217, and asparagine 229. The interval 293-322 (IKSTSGHSTQKRTKRSTLHQRKKSKSEPVN) is disordered. Positions 301 to 316 (TQKRTKRSTLHQRKKS) are enriched in basic residues. Disulfide bonds link cysteine 335–cysteine 401, cysteine 364–cysteine 433, and cysteine 368–cysteine 435. N-linked (GlcNAc...) asparagine glycosylation is present at asparagine 377.

This sequence belongs to the TGF-beta family. Homodimer; disulfide-linked.

It is found in the secreted. This chain is Protein 60A (gbb), found in Drosophila virilis (Fruit fly).